Reading from the N-terminus, the 166-residue chain is UPF0254 protein Maeo_0668 (166 aa).

This sequence belongs to the UPF0254 family.

The chain is UPF0254 protein Maeo_0668 from Methanococcus aeolicus (strain ATCC BAA-1280 / DSM 17508 / OCM 812 / Nankai-3).